A 440-amino-acid polypeptide reads, in one-letter code: Ribosomal protein uS12 methylthiotransferase RimO (440 aa).

The MTTase N-terminal domain occupies 1–117; the sequence is MKIFFISLGC…ITEVIDKVLG (117 aa). Residues Cys-10, Cys-46, Cys-80, Cys-154, Cys-158, and Cys-161 each coordinate [4Fe-4S] cluster. Residues 140 to 370 enclose the Radical SAM core domain; the sequence is TTGGYYSFLK…MEIQQGIAFE (231 aa). Residues 373–440 enclose the TRAM domain; that stretch reads ESMVGRKLKV…KEYDLIGTAE (68 aa).

The protein belongs to the methylthiotransferase family. RimO subfamily. The cofactor is [4Fe-4S] cluster.

The protein resides in the cytoplasm. The catalysed reaction is L-aspartate(89)-[ribosomal protein uS12]-hydrogen + (sulfur carrier)-SH + AH2 + 2 S-adenosyl-L-methionine = 3-methylsulfanyl-L-aspartate(89)-[ribosomal protein uS12]-hydrogen + (sulfur carrier)-H + 5'-deoxyadenosine + L-methionine + A + S-adenosyl-L-homocysteine + 2 H(+). Catalyzes the methylthiolation of an aspartic acid residue of ribosomal protein uS12. The sequence is that of Ribosomal protein uS12 methylthiotransferase RimO from Lachnoclostridium phytofermentans (strain ATCC 700394 / DSM 18823 / ISDg) (Clostridium phytofermentans).